The primary structure comprises 265 residues: Hydroxyethylthiazole kinase (265 aa).

A substrate-binding site is contributed by Met44. Positions 120 and 166 each coordinate ATP. Residue Gly193 coordinates substrate.

It belongs to the Thz kinase family. It depends on Mg(2+) as a cofactor.

It carries out the reaction 5-(2-hydroxyethyl)-4-methylthiazole + ATP = 4-methyl-5-(2-phosphooxyethyl)-thiazole + ADP + H(+). It participates in cofactor biosynthesis; thiamine diphosphate biosynthesis; 4-methyl-5-(2-phosphoethyl)-thiazole from 5-(2-hydroxyethyl)-4-methylthiazole: step 1/1. Functionally, catalyzes the phosphorylation of the hydroxyl group of 4-methyl-5-beta-hydroxyethylthiazole (THZ). In Methanosphaerula palustris (strain ATCC BAA-1556 / DSM 19958 / E1-9c), this protein is Hydroxyethylthiazole kinase.